Consider the following 226-residue polypeptide: Orotate phosphoribosyltransferase (226 aa).

5-phospho-alpha-D-ribose 1-diphosphate-binding positions include K26, 73-74 (YK), R100, K101, K104, H106, and 128-136 (EDVTTSGKS). The orotate site is built by T132 and R161.

It belongs to the purine/pyrimidine phosphoribosyltransferase family. PyrE subfamily. As to quaternary structure, homodimer. It depends on Mg(2+) as a cofactor.

It catalyses the reaction orotidine 5'-phosphate + diphosphate = orotate + 5-phospho-alpha-D-ribose 1-diphosphate. It participates in pyrimidine metabolism; UMP biosynthesis via de novo pathway; UMP from orotate: step 1/2. In terms of biological role, catalyzes the transfer of a ribosyl phosphate group from 5-phosphoribose 1-diphosphate to orotate, leading to the formation of orotidine monophosphate (OMP). The protein is Orotate phosphoribosyltransferase of Agathobacter rectalis (strain ATCC 33656 / DSM 3377 / JCM 17463 / KCTC 5835 / VPI 0990) (Eubacterium rectale).